The following is a 364-amino-acid chain: Acetylserotonin O-methyltransferase 1 (364 aa).

Residues Gly-208, Asp-231, Asp-251, and Lys-265 each coordinate S-adenosyl-L-homocysteine. His-269 functions as the Proton acceptor in the catalytic mechanism. Residues Glu-300 and Glu-330 contribute to the active site.

This sequence belongs to the class I-like SAM-binding methyltransferase superfamily. Cation-independent O-methyltransferase family. In terms of assembly, homodimer. As to expression, expressed in leaves, stems and flowers.

It localises to the cytoplasm. The enzyme catalyses N-acetylserotonin + S-adenosyl-L-methionine = melatonin + S-adenosyl-L-homocysteine + H(+). The protein operates within aromatic compound metabolism; melatonin biosynthesis; melatonin from serotonin: step 1/2. Functionally, methyltransferase which catalyzes the transfer of a methyl group onto N-acetylserotonin, producing melatonin (N-acetyl-5-methoxytryptamine). This is Acetylserotonin O-methyltransferase 1 from Oryza sativa subsp. japonica (Rice).